The primary structure comprises 179 residues: Large ribosomal subunit protein uL5 (179 aa).

The protein belongs to the universal ribosomal protein uL5 family. In terms of assembly, part of the 50S ribosomal subunit; part of the 5S rRNA/L5/L18/L25 subcomplex. Contacts the 5S rRNA and the P site tRNA. Forms a bridge to the 30S subunit in the 70S ribosome.

This is one of the proteins that bind and probably mediate the attachment of the 5S RNA into the large ribosomal subunit, where it forms part of the central protuberance. In the 70S ribosome it contacts protein S13 of the 30S subunit (bridge B1b), connecting the 2 subunits; this bridge is implicated in subunit movement. Contacts the P site tRNA; the 5S rRNA and some of its associated proteins might help stabilize positioning of ribosome-bound tRNAs. The protein is Large ribosomal subunit protein uL5 of Stutzerimonas stutzeri (strain A1501) (Pseudomonas stutzeri).